The primary structure comprises 355 residues: MFEKIEELERRYQELEALLADPAVLGNQPEFRKLSREHSDLSALVESYRNYKKVLVEITGNRELLADPEMKEMAEAELEALEEQQAALEAEIKLLLLPKDPNDNKSVILEIRAGTGGDEAALFAGDLFRMYGRYAESNRWRVEVISASESEKGGFKEIVASVEGDGVFAKLKYESGTHRVQRVPETEAQGRIHTSACTVAIMPEAEDVDIDINPADLKIDVYRSSGAGGQHVNTTDSAVRITHLPTGTVVACQEERSQIKNRAKAMKVLKTRILDTIMQEQSARLAADRKQQVGSGDRSERIRTYNFPQGRMTDHRIGLTLYRLDAIMAGDIGEITDSLRVYYQMEALKQQSEAA.

Gln-230 is modified (N5-methylglutamine).

It belongs to the prokaryotic/mitochondrial release factor family. In terms of processing, methylated by PrmC. Methylation increases the termination efficiency of RF1.

The protein localises to the cytoplasm. Functionally, peptide chain release factor 1 directs the termination of translation in response to the peptide chain termination codons UAG and UAA. This chain is Peptide chain release factor 1, found in Geotalea uraniireducens (strain Rf4) (Geobacter uraniireducens).